A 456-amino-acid chain; its full sequence is Adenylosuccinate lyase (456 aa).

N(6)-(1,2-dicarboxyethyl)-AMP-binding positions include 15–16 (RY), 90–92 (NHD), and 122–123 (TS). His-171 (proton donor/acceptor) is an active-site residue. Gln-248 serves as a coordination point for N(6)-(1,2-dicarboxyethyl)-AMP. Ser-296 serves as the catalytic Proton donor/acceptor. N(6)-(1,2-dicarboxyethyl)-AMP is bound by residues Ser-297, 302-304 (KVN), Asn-310, Arg-336, and 341-345 (STVLR).

This sequence belongs to the lyase 1 family. Adenylosuccinate lyase subfamily. Homotetramer. Residues from neighboring subunits contribute catalytic and substrate-binding residues to each active site.

It carries out the reaction N(6)-(1,2-dicarboxyethyl)-AMP = fumarate + AMP. The catalysed reaction is (2S)-2-[5-amino-1-(5-phospho-beta-D-ribosyl)imidazole-4-carboxamido]succinate = 5-amino-1-(5-phospho-beta-D-ribosyl)imidazole-4-carboxamide + fumarate. It participates in purine metabolism; AMP biosynthesis via de novo pathway; AMP from IMP: step 2/2. Its pathway is purine metabolism; IMP biosynthesis via de novo pathway; 5-amino-1-(5-phospho-D-ribosyl)imidazole-4-carboxamide from 5-amino-1-(5-phospho-D-ribosyl)imidazole-4-carboxylate: step 2/2. Catalyzes two reactions in de novo purine nucleotide biosynthesis. Catalyzes the breakdown of 5-aminoimidazole- (N-succinylocarboxamide) ribotide (SAICAR or 2-[5-amino-1-(5-phospho-beta-D-ribosyl)imidazole-4-carboxamido]succinate) to 5-aminoimidazole-4-carboxamide ribotide (AICAR or 5-amino-1-(5-phospho-beta-D-ribosyl)imidazole-4-carboxamide) and fumarate, and of adenylosuccinate (ADS or N(6)-(1,2-dicarboxyethyl)-AMP) to adenosine monophosphate (AMP) and fumarate. This Pseudomonas aeruginosa (strain ATCC 15692 / DSM 22644 / CIP 104116 / JCM 14847 / LMG 12228 / 1C / PRS 101 / PAO1) protein is Adenylosuccinate lyase (purB).